A 140-amino-acid chain; its full sequence is Lysozyme E (140 aa).

The signal sequence occupies residues 1–18; the sequence is MKAFIVLVALAMAAPALG. The region spanning 19–140 is the C-type lysozyme domain; sequence RTLDRCSLAR…GWLPSIDGCF (122 aa). 4 disulfide bridges follow: Cys24–Cys139, Cys45–Cys129, Cys80–Cys96, and Cys92–Cys110. Catalysis depends on residues Glu50 and Asp68.

The protein belongs to the glycosyl hydrolase 22 family. In terms of tissue distribution, found in the midgut.

The catalysed reaction is Hydrolysis of (1-&gt;4)-beta-linkages between N-acetylmuramic acid and N-acetyl-D-glucosamine residues in a peptidoglycan and between N-acetyl-D-glucosamine residues in chitodextrins.. Functionally, unlikely to play an active role in the humoral immune defense. May have a function in the digestion of bacteria in the food. The polypeptide is Lysozyme E (LysE) (Drosophila melanogaster (Fruit fly)).